The following is a 462-amino-acid chain: Glycine--tRNA ligase (462 aa).

Residues R101 and E164 each contribute to the substrate site. Residues 196–198 (RNE), 206–211 (FRTREF), 283–284 (EL), and 327–330 (GVDR) contribute to the ATP site. A substrate-binding site is contributed by 211 to 215 (FEQME). 323-327 (EPSAG) lines the substrate pocket.

The protein belongs to the class-II aminoacyl-tRNA synthetase family. Homodimer.

It is found in the cytoplasm. It carries out the reaction tRNA(Gly) + glycine + ATP = glycyl-tRNA(Gly) + AMP + diphosphate. Functionally, catalyzes the attachment of glycine to tRNA(Gly). This chain is Glycine--tRNA ligase, found in Thermobifida fusca (strain YX).